The following is a 462-amino-acid chain: MLDINAFLVEKGGDPEIIKASQKKRGDSVELVDEIIAEYKEWVKLRFDLDEHNKKLNSVQKEIGKRFKAKEDAKDLIAEKEKLSNEKKEIIEKEAEADKNLRSKINQVGNIVHESVVDSQDEENNELVRTWTPENYKKPEQIAAATGAPAKLSHHEVLLRLDGYDPERGVRIVGHRGYFLRNYGVFLNQALINYGLSFLSSKGYVPLQAPVMMNKEVMAKTAQLSQFDEELYKVIDGEDEKYLIATSEQPISAYHAGEWFESPAEQLPVRYAGYSSCFRREAGSHGKDAWGIFRVHAFEKIEQFVLTEPEKSWEEFDRMIGCSEEFYQSLGLPYRVVGIVSGELNNAAAKKYDLEAWFPFQQEYKELVSCSNCTDYQSRNLEIRCGIKQQNQQEKKYVHCLNSTLSATERTICCILENYQKEDGLVIPEVLRKYIPGEPEFIPYIKELPKNTTSVKKAKGKN.

246-248 (TSE) is a binding site for L-serine. ATP is bound by residues 279 to 281 (RRE) and Val-295. Glu-302 contributes to the L-serine binding site. 366 to 369 (ELVS) is a binding site for ATP. Thr-404 serves as a coordination point for L-serine.

Belongs to the class-II aminoacyl-tRNA synthetase family. Type-1 seryl-tRNA synthetase subfamily. In terms of assembly, homodimer. The tRNA molecule binds across the dimer.

It localises to the cytoplasm. It is found in the cytosol. The enzyme catalyses tRNA(Ser) + L-serine + ATP = L-seryl-tRNA(Ser) + AMP + diphosphate + H(+). In terms of biological role, catalyzes the attachment of serine to tRNA(Ser) in a two-step reaction: serine is first activated by ATP to form Ser-AMP and then transferred to the acceptor end of tRNA(Ser). This Candida albicans (strain SC5314 / ATCC MYA-2876) (Yeast) protein is Serine--tRNA ligase, cytoplasmic (SES1).